A 409-amino-acid polypeptide reads, in one-letter code: Ribose-phosphate pyrophosphokinase 1 (409 aa).

Mg(2+) is bound by residues Asp128, His130, and Asp143. A Phosphoserine modification is found at Ser199.

The protein belongs to the ribose-phosphate pyrophosphokinase family.

It localises to the cytoplasm. The catalysed reaction is D-ribose 5-phosphate + ATP = 5-phospho-alpha-D-ribose 1-diphosphate + AMP + H(+). The protein operates within metabolic intermediate biosynthesis; 5-phospho-alpha-D-ribose 1-diphosphate biosynthesis; 5-phospho-alpha-D-ribose 1-diphosphate from D-ribose 5-phosphate (route I): step 1/1. Its function is as follows. 5-phosphoribose 1-diphosphate synthase involved in nucleotide, histidine, and tryptophan biosynthesis. Active in heteromultimeric complexes with other 5-phosphoribose 1-diphosphate synthases. This Schizosaccharomyces pombe (strain 972 / ATCC 24843) (Fission yeast) protein is Ribose-phosphate pyrophosphokinase 1.